Here is a 493-residue protein sequence, read N- to C-terminus: Cobyric acid synthase (493 aa).

In terms of domain architecture, GATase cobBQ-type spans Pro-246–Phe-440. Cys-326 serves as the catalytic Nucleophile. The active site involves His-432.

It belongs to the CobB/CobQ family. CobQ subfamily.

Its pathway is cofactor biosynthesis; adenosylcobalamin biosynthesis. In terms of biological role, catalyzes amidations at positions B, D, E, and G on adenosylcobyrinic A,C-diamide. NH(2) groups are provided by glutamine, and one molecule of ATP is hydrogenolyzed for each amidation. The polypeptide is Cobyric acid synthase (Clostridium botulinum (strain Kyoto / Type A2)).